A 525-amino-acid chain; its full sequence is Chromosomal replication initiator protein DnaA (525 aa).

The tract at residues 1 to 71 (MNDFWQHCSA…SDLARDFWNA (71 aa)) is domain I, interacts with DnaA modulators. Residues 71-188 (APIEVQFVLD…GEADSMYERS (118 aa)) form a domain II region. A disordered region spans residues 160-182 (AAAGRRTWRPGPGAAPANGGEAD). Over residues 169–181 (PGPGAAPANGGEA) the composition is skewed to low complexity. A domain III, AAA+ region region spans residues 189–405 (KLNPVLTFDN…GALRKILAYS (217 aa)). Residues glycine 233, glycine 235, lysine 236, and threonine 237 each contribute to the ATP site. Residues 406 to 525 (KFHGREISIE…LHVLEQTLKG (120 aa)) form a domain IV, binds dsDNA region.

The protein belongs to the DnaA family. As to quaternary structure, oligomerizes as a right-handed, spiral filament on DNA at oriC.

It localises to the cytoplasm. Its function is as follows. Plays an essential role in the initiation and regulation of chromosomal replication. ATP-DnaA binds to the origin of replication (oriC) to initiate formation of the DNA replication initiation complex once per cell cycle. Binds the DnaA box (a 9 base pair repeat at the origin) and separates the double-stranded (ds)DNA. Forms a right-handed helical filament on oriC DNA; dsDNA binds to the exterior of the filament while single-stranded (ss)DNA is stabiized in the filament's interior. The ATP-DnaA-oriC complex binds and stabilizes one strand of the AT-rich DNA unwinding element (DUE), permitting loading of DNA polymerase. After initiation quickly degrades to an ADP-DnaA complex that is not apt for DNA replication. Binds acidic phospholipids. This is Chromosomal replication initiator protein DnaA from Burkholderia ambifaria (strain ATCC BAA-244 / DSM 16087 / CCUG 44356 / LMG 19182 / AMMD) (Burkholderia cepacia (strain AMMD)).